Reading from the N-terminus, the 438-residue chain is L-cysteine:1D-myo-inositol 2-amino-2-deoxy-alpha-D-glucopyranoside ligase (438 aa).

A disordered region spans residues 1-27; the sequence is MKSWSSRPVPELPGTGTAPRVHDTSTG. Residue cysteine 44 participates in Zn(2+) binding. L-cysteinyl-5'-AMP-binding positions include 44-47, threonine 59, and 82-84; these read CGIT and NVT. The short motif at 46–56 is the 'HIGH' region element; it reads ITPYDATHMGH. A 'ERGGDP' region motif is present at residues 208-213; the sequence is DHGGDP. L-cysteinyl-5'-AMP is bound at residue tryptophan 249. Zn(2+) is bound at residue cysteine 253. Residue 271–273 participates in L-cysteinyl-5'-AMP binding; that stretch reads GSD. Histidine 278 is a binding site for Zn(2+). Valine 304 contributes to the L-cysteinyl-5'-AMP binding site. The 'KMSKS' region motif lies at 310 to 314; the sequence is KMSKS.

The protein belongs to the class-I aminoacyl-tRNA synthetase family. MshC subfamily. Monomer. It depends on Zn(2+) as a cofactor.

It carries out the reaction 1D-myo-inositol 2-amino-2-deoxy-alpha-D-glucopyranoside + L-cysteine + ATP = 1D-myo-inositol 2-(L-cysteinylamino)-2-deoxy-alpha-D-glucopyranoside + AMP + diphosphate + H(+). Catalyzes the ATP-dependent condensation of GlcN-Ins and L-cysteine to form L-Cys-GlcN-Ins. The chain is L-cysteine:1D-myo-inositol 2-amino-2-deoxy-alpha-D-glucopyranoside ligase from Kocuria rhizophila (strain ATCC 9341 / DSM 348 / NBRC 103217 / DC2201).